A 503-amino-acid polypeptide reads, in one-letter code: Maturase K (503 aa).

Belongs to the intron maturase 2 family. MatK subfamily.

The protein localises to the plastid. It localises to the chloroplast. Usually encoded in the trnK tRNA gene intron. Probably assists in splicing its own and other chloroplast group II introns. This Panax quinquefolius (American ginseng) protein is Maturase K.